The sequence spans 232 residues: Protein TIFY 10c (232 aa).

Positions 54 to 73 are disordered; the sequence is PPAAGAGGAFRPPPTTMNLL. Positions 114-149 constitute a Tify domain; that stretch reads AGEKAQQLTIFYGGKVVVFENFPSTKVKDLLQIVST. A disordered region spans residues 151-176; the sequence is DGVDKNTGTAATQSLPRPAHNSLPDL. The span at 156–165 shows a compositional bias: polar residues; it reads NTGTAATQSL. The Jas motif lies at 177 to 202; that stretch reads PIARRNSLHRFLEKRKGRMNANAPYQ. The Nuclear localization signal motif lies at 179–186; it reads ARRNSLHR.

It belongs to the TIFY/JAZ family. As to quaternary structure, interacts with BHLH148. Interacts with COI1B in a coronatine-dependent manner. Coronatine is an analog of jasmonoyl isoleucine (JA-Ile). Interacts with TIFY5/JAZ2, TIFY6B/JAZ4, TIFY9/JAZ5, TIFY11A, TIFY11D/JAZ12 and TIFY11G/JAZ15. Post-translationally, ubiquitinated. Increase in jasmonoyl isoleucine (JA-Ile) levels mediates its degradation via COI1B-mediated proteasome pathway.

It is found in the nucleus. The protein resides in the cytoplasm. It localises to the cytosol. Its function is as follows. Repressor of jasmonate (JA) responses. Acts as a repressor of JA-induced resistance to the bacterial blight pathogen Xanthomonas oryzae pv. oryzae (Xoo). Regulates JA-induced accumulation of linalool at the transcriptional level of linalool synthase gene LIS. Linalool is important for resistance to bacterial blight pathogen Xoo. The protein is Protein TIFY 10c of Oryza sativa subsp. indica (Rice).